Consider the following 920-residue polypeptide: B3 domain-containing protein REM17 (920 aa).

3 consecutive DNA-binding regions (TF-B3) follow at residues 12–105 (NPHF…LGPS), 153–250 (RFVA…CRAK), and 267–361 (CFEG…LCPT). 3 disordered regions span residues 405-438 (DDDQTNIGNSSRKKRVSKNPREKVESSSDHSSFV), 540-562 (LACSEGNKSEESEEEGTEDKNTS), and 585-614 (DDDQTNIGNSSKEKRVKKNPVKKAESSSDH). Residues 423–432 (NPREKVESSS) are compositionally biased toward basic and acidic residues. Positions 436–531 (SFVGSVNPSS…NKPVLSLCPT (96 aa)) form a DNA-binding region, TF-B3 4. 2 DNA-binding regions (TF-B3) span residues 616-714 (SFVA…SLSE) and 727-823 (YFVG…LCPA). The span at 842 to 852 (NSLSSNPSSGD) shows a compositional bias: low complexity. Residues 842-870 (NSLSSNPSSGDDSSRSEESEEENMEDKNI) form a disordered region.

The protein localises to the nucleus. The chain is B3 domain-containing protein REM17 (REM17) from Arabidopsis thaliana (Mouse-ear cress).